We begin with the raw amino-acid sequence, 278 residues long: Dermonecrotic toxin LhSicTox-alphaIV1iii (278 aa).

Residue His-5 is part of the active site. Glu-25 and Asp-27 together coordinate Mg(2+). His-41 serves as the catalytic Nucleophile. 2 disulfides stabilise this stretch: Cys-45–Cys-51 and Cys-47–Cys-192. Asp-85 contributes to the Mg(2+) binding site.

The protein belongs to the arthropod phospholipase D family. Class II subfamily. The cofactor is Mg(2+). Expressed by the venom gland.

Its subcellular location is the secreted. It carries out the reaction an N-(acyl)-sphingosylphosphocholine = an N-(acyl)-sphingosyl-1,3-cyclic phosphate + choline. The catalysed reaction is an N-(acyl)-sphingosylphosphoethanolamine = an N-(acyl)-sphingosyl-1,3-cyclic phosphate + ethanolamine. It catalyses the reaction a 1-acyl-sn-glycero-3-phosphocholine = a 1-acyl-sn-glycero-2,3-cyclic phosphate + choline. The enzyme catalyses a 1-acyl-sn-glycero-3-phosphoethanolamine = a 1-acyl-sn-glycero-2,3-cyclic phosphate + ethanolamine. Its function is as follows. Dermonecrotic toxins cleave the phosphodiester linkage between the phosphate and headgroup of certain phospholipids (sphingolipid and lysolipid substrates), forming an alcohol (often choline) and a cyclic phosphate. This toxin acts on sphingomyelin (SM). It may also act on ceramide phosphoethanolamine (CPE), lysophosphatidylcholine (LPC) and lysophosphatidylethanolamine (LPE), but not on lysophosphatidylserine (LPS), and lysophosphatidylglycerol (LPG). It acts by transphosphatidylation, releasing exclusively cyclic phosphate products as second products. Induces dermonecrosis, hemolysis, increased vascular permeability, edema, inflammatory response, and platelet aggregation. This Loxosceles hirsuta (Recluse spider) protein is Dermonecrotic toxin LhSicTox-alphaIV1iii.